The sequence spans 527 residues: Ankyrin repeat domain-containing protein 42 (527 aa).

The disordered stretch occupies residues 1 to 27 (MPGVANPGPSKSRRETADSSSRKKVHF). A compositionally biased stretch (basic and acidic residues) spans 12–21 (SRRETADSSS). ANK repeat units follow at residues 25-54 (VHFSSIHDAVRAGDVKQLSDIVERGANLNE), 59-88 (HQFTPLHWAAHSGSLECLHWLLWSGADATQ), 92-121 (RGWTAAHIAAIRGQDACLQALIINGANLAT), 125-154 (RGCTPLHLAATHGHSFSLQIMLRSGVDPSV), 158-187 (REWKPVHYASFHGRLGCLQLLVKWGCGIED), 191-220 (NGNLPVHLAAMEGHLHCLKFLLSRMNSATQ), 228-257 (NGENVLDLAQRFLKQNVVEFIQGAQYEGSH), 263-293 (DLAFPGHVAAFKGDLEVLKKLIGDGVINLNE), 297-326 (NGSTPMHKAAGQGHIDCLQWLIEMGAESNI), and 330-360 (AGETPSDVAKRFAHLAAVKLLEGLQKYEIDD). Residues 395-484 (NARMRAHKKI…ETLQKIQVTS (90 aa)) are a coiled coil.

This chain is Ankyrin repeat domain-containing protein 42 (Ankrd42), found in Mus musculus (Mouse).